We begin with the raw amino-acid sequence, 1066 residues long: Vinculin (1066 aa).

Positions 1 to 835 are N-terminal globular head; that stretch reads MPVFHTRTIE…GAVAKVREAF (835 aa). At Ser97 the chain carries Phosphoserine. The segment at 168-208 is talin-interaction; sequence MTKMAKMIDERQQELTHQEHRVMLVNSMNTVKELLPVLISA. Lys173 carries the N6-acetyllysine modification. Tandem repeats lie at residues 259-369, 370-479, and 480-589. Residues 259–589 form a 3 X 112 AA tandem repeats region; it reads ASKDTEAMKR…LKDLKTQMQE (331 aa). Ser260, Ser272, Ser275, Ser290, Ser346, and Ser434 each carry phosphoserine. At Lys496 the chain carries N6-acetyllysine. At Tyr537 the chain carries Phosphotyrosine. Residues Ser574, Ser579, and Ser600 each carry the phosphoserine modification. A phosphothreonine mark is found at Thr604 and Thr672. Ser721 is subject to Phosphoserine. Residues 741 to 764 are interaction with ACTN4; the sequence is MANIQPQMLVAGATSIARRANRIL. 2 positions are modified to phosphoserine: Ser795 and Ser809. Position 822 is a phosphotyrosine (Tyr822). Residues 836–878 form a linker (Pro-rich) region; it reads QPQEPDFPPPPPDLEQLRLTDELAPPKPPLPEGEVPPPRPPPP. The disordered stretch occupies residues 857–887; sequence ELAPPKPPLPEGEVPPPRPPPPEEKDEEFPE. Pro residues predominate over residues 860-876; that stretch reads PPKPPLPEGEVPPPRPP. The tract at residues 879 to 1066 is C-terminal tail; that stretch reads EEKDEEFPEQ…RWVRKTPWYQ (188 aa). Facilitates phospholipid membrane insertion regions lie at residues 935 to 978 and 1052 to 1066; these read RLVR…KRIR and AGFTLRWVRKTPWYQ. Tyr1065 bears the Phosphotyrosine; by SRC-type Tyr-kinases mark.

This sequence belongs to the vinculin/alpha-catenin family. In terms of assembly, exhibits self-association properties. Part of a complex composed of THSD1, PTK2/FAK1, TLN1 and VCL. Interacts with APBB1IP, NRAP and TLN1. Interacts with CTNNB1 and this interaction is necessary for its localization to the cell-cell junctions and for its function in regulating cell surface expression of E-cadherin. Interacts with SORBS1. Interacts with SYNM. Interacts with CTNNA1. Binds to ACTN4; this interaction triggers conformational changes. Interacts with FLII. In terms of processing, phosphorylated; on serines, threonines and tyrosines. Phosphorylation on Tyr-1065 in activated platelets affects head-tail interactions and cell spreading but has no effect on actin binding nor on localization to focal adhesion plaques. Post-translationally, acetylated; mainly by myristic acid but also by a small amount of palmitic acid.

It is found in the cell membrane. The protein resides in the cell junction. The protein localises to the adherens junction. Its subcellular location is the focal adhesion. It localises to the cytoplasm. It is found in the cytoskeleton. The protein resides in the sarcolemma. The protein localises to the cell projection. Its subcellular location is the podosome. Its function is as follows. Actin filament (F-actin)-binding protein involved in cell-matrix adhesion and cell-cell adhesion. Regulates cell-surface E-cadherin expression and potentiates mechanosensing by the E-cadherin complex. May also play important roles in cell morphology and locomotion. The protein is Vinculin of Rattus norvegicus (Rat).